Consider the following 166-residue polypeptide: MLELDLQIASETSAPDEARFRLWCEMGLRQRSADSELTIRLVDENEGRELNHTWRHKNYATNVLSFPADAPDDMLDIPLLGDLVICVPVVNREAAEQGKSVDAHWAHMVIHGCLHLLGYDHIDDEEAEEMEALERTLLEELGYPDPYAEDESADHPHSDTPSKDHE.

Zn(2+) is bound by residues His-111, His-115, and His-121. Positions 141–166 are disordered; that stretch reads LGYPDPYAEDESADHPHSDTPSKDHE. Positions 153-166 are enriched in basic and acidic residues; it reads ADHPHSDTPSKDHE.

Belongs to the endoribonuclease YbeY family. Zn(2+) is required as a cofactor.

The protein localises to the cytoplasm. Single strand-specific metallo-endoribonuclease involved in late-stage 70S ribosome quality control and in maturation of the 3' terminus of the 16S rRNA. In Pseudomonas savastanoi pv. phaseolicola (strain 1448A / Race 6) (Pseudomonas syringae pv. phaseolicola (strain 1448A / Race 6)), this protein is Endoribonuclease YbeY.